The chain runs to 440 residues: T-box transcription factor T homolog 2 (440 aa).

A DNA-binding region (T-box) is located at residues 44-215 (LWEKFKSLTN…HNPFAKAFLD (172 aa)). Disordered stretches follow at residues 282–303 (APYP…DTAA) and 393–440 (TTAS…MPSM). Residues 409 to 440 (STDSGYGHSTTPPAPQTRITSNNWSPMTMPSM) show a composition bias toward polar residues.

As to expression, mesoderm and notochord.

The protein resides in the nucleus. Functionally, involved in the transcriptional regulation of genes required for mesoderm formation and differentiation. The protein is T-box transcription factor T homolog 2 of Branchiostoma floridae (Florida lancelet).